A 265-amino-acid polypeptide reads, in one-letter code: tRNA (guanine-N(7)-)-methyltransferase (265 aa).

The span at 1–16 shows a compositional bias: basic and acidic residues; that stretch reads MNHDDPNASGVPHDDA. The tract at residues 1-40 is disordered; sequence MNHDDPNASGVPHDDANDAAPASASDAARATGHADDESSP. The span at 18–31 shows a compositional bias: low complexity; the sequence is DAAPASASDAARAT. The S-adenosyl-L-methionine site is built by glutamate 95, glutamate 120, aspartate 147, and aspartate 170. Aspartate 170 is a catalytic residue. Residues lysine 174, aspartate 206, and 241–244 each bind substrate; that span reads TKFE.

Belongs to the class I-like SAM-binding methyltransferase superfamily. TrmB family.

It carries out the reaction guanosine(46) in tRNA + S-adenosyl-L-methionine = N(7)-methylguanosine(46) in tRNA + S-adenosyl-L-homocysteine. Its pathway is tRNA modification; N(7)-methylguanine-tRNA biosynthesis. Catalyzes the formation of N(7)-methylguanine at position 46 (m7G46) in tRNA. The protein is tRNA (guanine-N(7)-)-methyltransferase of Burkholderia thailandensis (strain ATCC 700388 / DSM 13276 / CCUG 48851 / CIP 106301 / E264).